Here is a 557-residue protein sequence, read N- to C-terminus: Transmembrane protein 209 (557 aa).

A helical transmembrane segment spans residues 28 to 48; sequence VVLAWGLLNVSLAGMIYTEMT. N57 carries an N-linked (GlcNAc...) asparagine glycan. A helical membrane pass occupies residues 60-80; that stretch reads YWPLWYIELALASLFSLNALF. 2 disordered regions span residues 108–156 and 194–232; these read PYSS…KFSP and YSSS…TDKE. Over residues 125 to 140 the composition is skewed to polar residues; sequence VPASTPSPSMQGQNVL. Low complexity-rich tracts occupy residues 141–156, 194–205, and 219–228; these read SYSP…KFSP, YSSSPGSSQYPS, and RSSPSTYSSP. 2 N-linked (GlcNAc...) asparagine glycosylation sites follow: N273 and N343.

It is found in the membrane. The protein resides in the nucleus envelope. Its subcellular location is the golgi apparatus. The protein localises to the cytoplasm. The polypeptide is Transmembrane protein 209 (tmem209) (Xenopus tropicalis (Western clawed frog)).